A 346-amino-acid polypeptide reads, in one-letter code: Ferredoxin--NADP reductase 1 (346 aa).

Glu37, Lys45, Tyr49, Ile89, Pro124, Asp287, and Ser328 together coordinate FAD.

This sequence belongs to the ferredoxin--NADP reductase type 2 family. As to quaternary structure, homodimer. FAD is required as a cofactor.

The enzyme catalyses 2 reduced [2Fe-2S]-[ferredoxin] + NADP(+) + H(+) = 2 oxidized [2Fe-2S]-[ferredoxin] + NADPH. This is Ferredoxin--NADP reductase 1 from Bacillus pumilus (strain SAFR-032).